The chain runs to 161 residues: UPF0178 protein BR1979/BS1330_I1973 (161 aa).

Belongs to the UPF0178 family.

This chain is UPF0178 protein BR1979/BS1330_I1973, found in Brucella suis biovar 1 (strain 1330).